A 132-amino-acid polypeptide reads, in one-letter code: Small ribosomal subunit protein uS8 (132 aa).

Belongs to the universal ribosomal protein uS8 family. In terms of assembly, part of the 30S ribosomal subunit. Contacts proteins S5 and S12.

Functionally, one of the primary rRNA binding proteins, it binds directly to 16S rRNA central domain where it helps coordinate assembly of the platform of the 30S subunit. This Staphylococcus saprophyticus subsp. saprophyticus (strain ATCC 15305 / DSM 20229 / NCIMB 8711 / NCTC 7292 / S-41) protein is Small ribosomal subunit protein uS8.